The primary structure comprises 117 residues: Large ribosomal subunit protein bL20 (117 aa).

Belongs to the bacterial ribosomal protein bL20 family.

Its function is as follows. Binds directly to 23S ribosomal RNA and is necessary for the in vitro assembly process of the 50S ribosomal subunit. It is not involved in the protein synthesizing functions of that subunit. This chain is Large ribosomal subunit protein bL20, found in Campylobacter jejuni subsp. jejuni serotype O:6 (strain 81116 / NCTC 11828).